The following is a 384-amino-acid chain: Carbamoyl phosphate synthase small chain (384 aa).

The segment at 1–192 (MPIAAAKPAL…FGPVAEQQGQ (192 aa)) is CPSase. Residues S51, G244, and G246 each coordinate L-glutamine. Residues 196-381 (TVVALDFGVK…VKLMRQQKAE (186 aa)) form the Glutamine amidotransferase type-1 domain. The Nucleophile role is filled by C272. 5 residues coordinate L-glutamine: M273, Q276, N312, G314, and F315. Catalysis depends on residues H354 and E356.

The protein belongs to the CarA family. In terms of assembly, composed of two chains; the small (or glutamine) chain promotes the hydrolysis of glutamine to ammonia, which is used by the large (or ammonia) chain to synthesize carbamoyl phosphate. Tetramer of heterodimers (alpha,beta)4.

The catalysed reaction is hydrogencarbonate + L-glutamine + 2 ATP + H2O = carbamoyl phosphate + L-glutamate + 2 ADP + phosphate + 2 H(+). The enzyme catalyses L-glutamine + H2O = L-glutamate + NH4(+). The protein operates within amino-acid biosynthesis; L-arginine biosynthesis; carbamoyl phosphate from bicarbonate: step 1/1. It functions in the pathway pyrimidine metabolism; UMP biosynthesis via de novo pathway; (S)-dihydroorotate from bicarbonate: step 1/3. Its function is as follows. Small subunit of the glutamine-dependent carbamoyl phosphate synthetase (CPSase). CPSase catalyzes the formation of carbamoyl phosphate from the ammonia moiety of glutamine, carbonate, and phosphate donated by ATP, constituting the first step of 2 biosynthetic pathways, one leading to arginine and/or urea and the other to pyrimidine nucleotides. The small subunit (glutamine amidotransferase) binds and cleaves glutamine to supply the large subunit with the substrate ammonia. The protein is Carbamoyl phosphate synthase small chain of Synechocystis sp. (strain ATCC 27184 / PCC 6803 / Kazusa).